We begin with the raw amino-acid sequence, 183 residues long: ATP-dependent protease subunit HslV (183 aa).

The active site involves Thr13. Na(+) is bound by residues Gly168, Cys171, and Thr174.

Belongs to the peptidase T1B family. HslV subfamily. As to quaternary structure, a double ring-shaped homohexamer of HslV is capped on each side by a ring-shaped HslU homohexamer. The assembly of the HslU/HslV complex is dependent on binding of ATP.

The protein resides in the cytoplasm. The catalysed reaction is ATP-dependent cleavage of peptide bonds with broad specificity.. Its activity is regulated as follows. Allosterically activated by HslU binding. Functionally, protease subunit of a proteasome-like degradation complex believed to be a general protein degrading machinery. The protein is ATP-dependent protease subunit HslV of Xylella fastidiosa (strain M23).